Reading from the N-terminus, the 284-residue chain is Small ribosomal subunit protein uS2 (284 aa).

This sequence belongs to the universal ribosomal protein uS2 family.

The chain is Small ribosomal subunit protein uS2 (rpsB) from Mycoplasma genitalium (strain ATCC 33530 / DSM 19775 / NCTC 10195 / G37) (Mycoplasmoides genitalium).